We begin with the raw amino-acid sequence, 637 residues long: MVGEPKIVSVWQFPFPIVTGRHLPYCPGNCAAHLNYEIAHQLLFSLSHQPRSRILVNRMIFSSPAWVPSPDQSAPDQVPIGDYVLSNHVLSKNDAPFVDAISGHVYTMAMLRTRVESLARGLAADLNWSPNTGSPEEKVVAIYSLNTVALSGPLLTIMYKIDYFILCWAVHRLNGICMPLHSTCTSAEITSHMITASCTTIFTCSGLMSTCLEAAKELQLPAEKIYTLALPSTYLDNANLEDSPRLKTLEQLADQGSQLPQLEPLRWSAGQGKSQVAFLCSTSGTSGRQKLAMLTHYGIITNLLQMSAFEGFANDTYGQTVAAAIPFSHSYGILIGHVGVLRGESHIVFPRFDMQRMLGSVASYRVNRLYLVPPILAVLGANSFLMEPFDLSSVTSVVTGAAALDRTVAGRLKSLQPSWEFLHAWGLTETCIVVTFTSKHDVWYGSSGSLLPGCQLRLVDAEGKDVENYDQSGEVYYKAPNMFVGYLGDHESTISSFDDDGWMRTGDMGAIQVSPNGVEHLFIRDRIKDMIKVKGMQVIPADVEAAMLTHPAVADVAVIGVPDELAGERAMAFVIRSTSVMSEFSEDDLRDSINDHLEDRLHETHWLGDRLEFVAEIPKSQSGKVLKKILREKAASN.

ATP is bound by residues 282 to 290 (TSGTSGRQK), 423 to 428 (HAWGLT), D507, R526, and K624. The segment at 353–423 (DMQRMLGSVA…SLQPSWEFLH (71 aa)) is SBD1. The tract at residues 424–486 (AWGLTETCIV…YKAPNMFVGY (63 aa)) is SBD2.

It belongs to the ATP-dependent AMP-binding enzyme family.

The protein operates within secondary metabolite biosynthesis. Functionally, acyl-CoA ligase; part of the gene cluster that mediates the biosynthesis of beauveriolides I and III, cyclodepsipeptides acting as inhibitors of the acyl-CoA:cholesterol acyltransferase. The HR-PKS cm3B initiates the biosynthesis of beauveriolides by iteratively catalyzing the formation of the linear polyketide chain. The ATP-dependent acetyl-CoA ligase cm3D converts the polyketide carboxylic acid to a CoA thioester which id shuttled to the first T domain in the NRPS cm3A by the acetyltransferase cm3C. Cm3A contains 13 domains and assembles the polyketide chain, L-phenylalanine, L-alanine, and D-leucine (or D-allo-isoleucine) to form beauveriolide I (or beauveriolide III). The production of both beauveriolides I and III suggests the substrate adaptability of cm3B, using different amino acids as substrates. This Cordyceps militaris (strain CM01) (Caterpillar fungus) protein is Acyl-CoA ligase cm3C.